A 167-amino-acid polypeptide reads, in one-letter code: Myelin basic protein (167 aa).

At A1 the chain carries N-acetylalanine. Phosphoserine is present on residues S7 and S12. Phosphotyrosine is present on Y14. Residue T17 is modified to Phosphothreonine. At S19 the chain carries Phosphoserine. Phosphothreonine is present on T20. Residues R25 and R31 each carry the citrulline modification. T35 carries the post-translational modification Phosphothreonine. At S40 the chain carries Phosphoserine. Residues R43 and R49 each carry the omega-N-methylarginine modification. An induces experimental autoimmune encephalomyelitis (EAE) 1 region spans residues 45 to 87 (FGSDRAAPKRGSGKDSHHAARTTHYGSLPQKSQRSQDENPVVH). The tract at residues 46–114 (GSDRAAPKRG…GRGLSLSRFS (69 aa)) is disordered. S56 is subject to Phosphoserine. T67 carries the phosphothreonine modification. Y69 bears the Phosphotyrosine mark. Position 76 is a phosphoserine (S76). T94 and T97 each carry phosphothreonine. Position 102 is a deamidated glutamine (Q102). R106 is modified (omega-N-methylarginine; alternate). At R106 the chain carries Symmetric dimethylarginine; alternate. Residue S114 is modified to Phosphoserine. Residues 114–122 (SWGAEGQKP) form an induces experimental autoimmune encephalomyelitis (EAE) 2 region. At K121 the chain carries N6-acetyllysine. A Citrulline modification is found at R129. A disordered region spans residues 136–167 (GFKGAHDAQGTLSKIFKLGGRDSRSGSPMARR). Q144 is subject to Deamidated glutamine. A Citrulline modification is found at R156. S158 carries the post-translational modification Phosphoserine. Position 162 is a phosphoserine; by UHMK1 (S162). A Citrulline modification is found at R167.

It belongs to the myelin basic protein family. In terms of assembly, homodimer. In terms of processing, at least 5 charge isomers; C1 (the most cationic, least modified, and most abundant form), C2, C3, C4 and C5 (the least cationic form); are produced as a result of optional post-translational modifications such as phosphorylation of serine or threonine residues, deamidation of glutamine or asparagine residues, citrullination and methylation of arginine residues. C1 and C2 are unphosphorylated, C3 and C4 are monophosphorylated and C5 is phosphorylated at two positions. Post-translationally, phosphorylated by TAOK2, VRK2, MAPK11, MAPK12, MAPK14 and MINK1. Proteolytically cleaved in B cell lysosomes by cathepsin CTSG which degrades the major immunogenic MBP epitope and prevents the activation of MBP-specific autoreactive T cells. In terms of tissue distribution, found in both the central and the peripheral nervous system.

The protein resides in the myelin membrane. Functionally, is, with PLP, the most abundant protein component of the myelin membrane in the CNS. Has a role in both the formation and stabilization of this compact multilayer arrangement of bilayers. Each splice variant and charge isomer may have a specialized function in the assembly of an optimized, biochemically functional myelin membrane. This is Myelin basic protein (MBP) from Cavia porcellus (Guinea pig).